The primary structure comprises 266 residues: HTH-type transcriptional regulator MurR (266 aa).

An HTH rpiR-type domain is found at 1-77 (MLYLTKIRNA…MALIGEYSAS (77 aa)). Positions 37–56 (SRQMAKQLGISQSSIVKFAQ) form a DNA-binding region, H-T-H motif. The SIS domain maps to 128-266 (IIEVISKAPF…LLFVGLVQHQ (139 aa)).

Homotetramer.

The protein operates within amino-sugar metabolism; N-acetylmuramate degradation [regulation]. In terms of biological role, represses the expression of the murPQ operon involved in the uptake and degradation of N-acetylmuramic acid (MurNAc). Binds to two adjacent inverted repeats within the operator region. MurNAc 6-phosphate, the substrate of MurQ, is the specific inducer that weakens binding of MurR to the operator. This Shigella flexneri serotype 5b (strain 8401) protein is HTH-type transcriptional regulator MurR.